Here is a 138-residue protein sequence, read N- to C-terminus: Large ribosomal subunit protein uL16 (138 aa).

The span at 1 to 17 shows a compositional bias: basic residues; sequence MLIPRKVKHRKQHHPRQ. Positions 1–24 are disordered; it reads MLIPRKVKHRKQHHPRQRGIASGG.

The protein belongs to the universal ribosomal protein uL16 family. In terms of assembly, part of the 50S ribosomal subunit.

Binds 23S rRNA and is also seen to make contacts with the A and possibly P site tRNAs. The chain is Large ribosomal subunit protein uL16 from Mycolicibacterium gilvum (strain PYR-GCK) (Mycobacterium gilvum (strain PYR-GCK)).